The following is a 331-amino-acid chain: Glyoxylate reductase (331 aa).

NADP(+)-binding positions include 158–161, 180–182, and 239–241; these read FGRI, SRT, and TSR. Catalysis depends on residues R241 and E270. H288 (proton donor) is an active-site residue. An NADP(+)-binding site is contributed by 288–290; it reads HIG.

The protein belongs to the D-isomer specific 2-hydroxyacid dehydrogenase family. GyaR subfamily. Homodimer.

It is found in the cytoplasm. It carries out the reaction glycolate + NAD(+) = glyoxylate + NADH + H(+). This chain is Glyoxylate reductase, found in Thermococcus litoralis (strain ATCC 51850 / DSM 5473 / JCM 8560 / NS-C).